Here is a 115-residue protein sequence, read N- to C-terminus: Large ribosomal subunit protein bL19 (115 aa).

The protein belongs to the bacterial ribosomal protein bL19 family.

Its function is as follows. This protein is located at the 30S-50S ribosomal subunit interface and may play a role in the structure and function of the aminoacyl-tRNA binding site. This chain is Large ribosomal subunit protein bL19, found in Nitratidesulfovibrio vulgaris (strain DSM 19637 / Miyazaki F) (Desulfovibrio vulgaris).